A 383-amino-acid chain; its full sequence is Probable arabinan endo-1,5-alpha-L-arabinosidase D (383 aa).

Positions 1–22 (MVHITLPGLLLCLCLYLSVAPA) are cleaved as a signal peptide. The active-site Proton acceptor is the Asp49. Residues Asn75, Asn163, and Asn206 are each glycosylated (N-linked (GlcNAc...) asparagine). Glu227 functions as the Proton donor in the catalytic mechanism. The N-linked (GlcNAc...) asparagine glycan is linked to Asn325. Residue Asn356 is the site of GPI-anchor amidated asparagine attachment. A propeptide spans 357-383 (PGNSLQPPSSVSLQIVAFLCLVILFTL) (removed in mature form).

The protein belongs to the glycosyl hydrolase 43 family.

The protein localises to the cell membrane. The catalysed reaction is Endohydrolysis of (1-&gt;5)-alpha-arabinofuranosidic linkages in (1-&gt;5)-arabinans.. It functions in the pathway glycan metabolism; L-arabinan degradation. Endo-1,5-alpha-L-arabinanase involved in degradation of pectin. Its preferred substrate is linear 1,5-alpha-L-arabinan. This is Probable arabinan endo-1,5-alpha-L-arabinosidase D (abnD) from Emericella nidulans (strain FGSC A4 / ATCC 38163 / CBS 112.46 / NRRL 194 / M139) (Aspergillus nidulans).